Here is a 500-residue protein sequence, read N- to C-terminus: Probable cytosol aminopeptidase (500 aa).

Mn(2+) contacts are provided by Lys265 and Asp270. The active site involves Lys277. The Mn(2+) site is built by Asp288, Asp347, and Glu349. Residue Arg351 is part of the active site.

This sequence belongs to the peptidase M17 family. It depends on Mn(2+) as a cofactor.

Its subcellular location is the cytoplasm. The catalysed reaction is Release of an N-terminal amino acid, Xaa-|-Yaa-, in which Xaa is preferably Leu, but may be other amino acids including Pro although not Arg or Lys, and Yaa may be Pro. Amino acid amides and methyl esters are also readily hydrolyzed, but rates on arylamides are exceedingly low.. The enzyme catalyses Release of an N-terminal amino acid, preferentially leucine, but not glutamic or aspartic acids.. Its function is as follows. Presumably involved in the processing and regular turnover of intracellular proteins. Catalyzes the removal of unsubstituted N-terminal amino acids from various peptides. This is Probable cytosol aminopeptidase from Corynebacterium diphtheriae (strain ATCC 700971 / NCTC 13129 / Biotype gravis).